The following is a 232-amino-acid chain: Purine nucleoside phosphorylase DeoD-type (232 aa).

His-4 is an a purine D-ribonucleoside binding site. Phosphate is bound by residues Gly-20, Arg-24, Arg-43, and Arg-87–Thr-90. A purine D-ribonucleoside-binding positions include Glu-179–Glu-181 and Ser-203–Asp-204. The active-site Proton donor is Asp-204.

This sequence belongs to the PNP/UDP phosphorylase family. As to quaternary structure, homohexamer; trimer of homodimers.

The catalysed reaction is a purine D-ribonucleoside + phosphate = a purine nucleobase + alpha-D-ribose 1-phosphate. It catalyses the reaction a purine 2'-deoxy-D-ribonucleoside + phosphate = a purine nucleobase + 2-deoxy-alpha-D-ribose 1-phosphate. Functionally, catalyzes the reversible phosphorolytic breakdown of the N-glycosidic bond in the beta-(deoxy)ribonucleoside molecules, with the formation of the corresponding free purine bases and pentose-1-phosphate. The protein is Purine nucleoside phosphorylase DeoD-type of Caldanaerobacter subterraneus subsp. tengcongensis (strain DSM 15242 / JCM 11007 / NBRC 100824 / MB4) (Thermoanaerobacter tengcongensis).